The primary structure comprises 219 residues: Ion-translocating oxidoreductase complex subunit G (219 aa).

Residues 25-45 traverse the membrane as a helical segment; sequence GLLLGLFSLVSALMLALASDA. At T187 the chain carries FMN phosphoryl threonine.

The protein belongs to the RnfG family. The complex is composed of six subunits: RnfA, RnfB, RnfC, RnfD, RnfE and RnfG. It depends on FMN as a cofactor.

It localises to the cellular chromatophore membrane. In terms of biological role, part of a membrane-bound complex that couples electron transfer with translocation of ions across the membrane. The sequence is that of Ion-translocating oxidoreductase complex subunit G from Cereibacter sphaeroides (strain ATCC 17023 / DSM 158 / JCM 6121 / CCUG 31486 / LMG 2827 / NBRC 12203 / NCIMB 8253 / ATH 2.4.1.) (Rhodobacter sphaeroides).